The chain runs to 144 residues: uncharacterized protein (144 aa).

An N-terminal signal peptide occupies residues 1 to 23 (MVIPLRNKYGILFLIAVCIMVSG). Residues 119–144 (QNGQRKTMTRIESKTGREEKDEKSKS) form a disordered region. Basic and acidic residues predominate over residues 127–144 (TRIESKTGREEKDEKSKS).

This is an uncharacterized protein from Bacillus subtilis (strain 168).